Here is a 356-residue protein sequence, read N- to C-terminus: Phospho-N-acetylmuramoyl-pentapeptide-transferase (356 aa).

10 consecutive transmembrane segments (helical) span residues 27-47, 73-93, 97-117, 138-158, 165-185, 195-215, 232-252, 258-278, 284-304, and 333-353; these read ATLM…INML, TMGG…WMDL, FVWA…LDDL, FLVA…WLYV, AIPL…GAGN, GLAI…AYLA, AGEL…FLWF, AVFM…AIAV, IVLA…IIQV, and KVVI…LATL.

This sequence belongs to the glycosyltransferase 4 family. MraY subfamily. Mg(2+) is required as a cofactor.

It localises to the cell inner membrane. The catalysed reaction is UDP-N-acetyl-alpha-D-muramoyl-L-alanyl-gamma-D-glutamyl-meso-2,6-diaminopimeloyl-D-alanyl-D-alanine + di-trans,octa-cis-undecaprenyl phosphate = di-trans,octa-cis-undecaprenyl diphospho-N-acetyl-alpha-D-muramoyl-L-alanyl-D-glutamyl-meso-2,6-diaminopimeloyl-D-alanyl-D-alanine + UMP. It functions in the pathway cell wall biogenesis; peptidoglycan biosynthesis. Functionally, catalyzes the initial step of the lipid cycle reactions in the biosynthesis of the cell wall peptidoglycan: transfers peptidoglycan precursor phospho-MurNAc-pentapeptide from UDP-MurNAc-pentapeptide onto the lipid carrier undecaprenyl phosphate, yielding undecaprenyl-pyrophosphoryl-MurNAc-pentapeptide, known as lipid I. This Erythrobacter litoralis (strain HTCC2594) protein is Phospho-N-acetylmuramoyl-pentapeptide-transferase.